Reading from the N-terminus, the 297-residue chain is Phosphoribosylaminoimidazole-succinocarboxamide synthase (297 aa).

This sequence belongs to the SAICAR synthetase family.

The catalysed reaction is 5-amino-1-(5-phospho-D-ribosyl)imidazole-4-carboxylate + L-aspartate + ATP = (2S)-2-[5-amino-1-(5-phospho-beta-D-ribosyl)imidazole-4-carboxamido]succinate + ADP + phosphate + 2 H(+). It functions in the pathway purine metabolism; IMP biosynthesis via de novo pathway; 5-amino-1-(5-phospho-D-ribosyl)imidazole-4-carboxamide from 5-amino-1-(5-phospho-D-ribosyl)imidazole-4-carboxylate: step 1/2. The protein is Phosphoribosylaminoimidazole-succinocarboxamide synthase (purC) of Mycobacterium leprae (strain TN).